The chain runs to 107 residues: Protein HitA (107 aa).

Residues 5–107 form the HIT domain; sequence IFCKIAAKEI…LHIHIMGTPV (103 aa). Residues 97–101 carry the Histidine triad motif motif; that stretch reads HLHIH.

The sequence is that of Protein HitA (hitA) from Neisseria gonorrhoeae.